Here is a 174-residue protein sequence, read N- to C-terminus: Shikimate kinase (174 aa).

Residue 15–20 (GTGKST) participates in ATP binding. Serine 19 contacts Mg(2+). Positions 37, 61, and 82 each coordinate substrate. Arginine 120 is a binding site for ATP. Position 138 (arginine 138) interacts with substrate.

The protein belongs to the shikimate kinase family. In terms of assembly, monomer. Mg(2+) is required as a cofactor.

The protein resides in the cytoplasm. The enzyme catalyses shikimate + ATP = 3-phosphoshikimate + ADP + H(+). It participates in metabolic intermediate biosynthesis; chorismate biosynthesis; chorismate from D-erythrose 4-phosphate and phosphoenolpyruvate: step 5/7. Functionally, catalyzes the specific phosphorylation of the 3-hydroxyl group of shikimic acid using ATP as a cosubstrate. The chain is Shikimate kinase from Staphylococcus aureus (strain MSSA476).